A 259-amino-acid chain; its full sequence is Indole-3-glycerol phosphate synthase (259 aa).

The protein belongs to the TrpC family.

The enzyme catalyses 1-(2-carboxyphenylamino)-1-deoxy-D-ribulose 5-phosphate + H(+) = (1S,2R)-1-C-(indol-3-yl)glycerol 3-phosphate + CO2 + H2O. It participates in amino-acid biosynthesis; L-tryptophan biosynthesis; L-tryptophan from chorismate: step 4/5. The chain is Indole-3-glycerol phosphate synthase from Rhodopirellula baltica (strain DSM 10527 / NCIMB 13988 / SH1).